The chain runs to 326 residues: Beta-ketoacyl-[acyl-carrier-protein] synthase III (326 aa).

Active-site residues include Cys120 and His253. Residues 254 to 258 form an ACP-binding region; sequence QANIR. The active site involves Asn283.

This sequence belongs to the thiolase-like superfamily. FabH family. Homodimer.

The protein localises to the cytoplasm. The catalysed reaction is malonyl-[ACP] + acetyl-CoA + H(+) = 3-oxobutanoyl-[ACP] + CO2 + CoA. The protein operates within lipid metabolism; fatty acid biosynthesis. Its function is as follows. Catalyzes the condensation reaction of fatty acid synthesis by the addition to an acyl acceptor of two carbons from malonyl-ACP. Catalyzes the first condensation reaction which initiates fatty acid synthesis and may therefore play a role in governing the total rate of fatty acid production. Possesses both acetoacetyl-ACP synthase and acetyl transacylase activities. Its substrate specificity determines the biosynthesis of branched-chain and/or straight-chain of fatty acids. This chain is Beta-ketoacyl-[acyl-carrier-protein] synthase III, found in Ralstonia nicotianae (strain ATCC BAA-1114 / GMI1000) (Ralstonia solanacearum).